The sequence spans 234 residues: Phosphoribosylaminoimidazole-succinocarboxamide synthase (234 aa).

Belongs to the SAICAR synthetase family.

It carries out the reaction 5-amino-1-(5-phospho-D-ribosyl)imidazole-4-carboxylate + L-aspartate + ATP = (2S)-2-[5-amino-1-(5-phospho-beta-D-ribosyl)imidazole-4-carboxamido]succinate + ADP + phosphate + 2 H(+). The protein operates within purine metabolism; IMP biosynthesis via de novo pathway; 5-amino-1-(5-phospho-D-ribosyl)imidazole-4-carboxamide from 5-amino-1-(5-phospho-D-ribosyl)imidazole-4-carboxylate: step 1/2. The chain is Phosphoribosylaminoimidazole-succinocarboxamide synthase from Streptococcus agalactiae serotype III (strain NEM316).